The sequence spans 348 residues: MELAMVNLSEGNGSDPEPPAPESRPLFGIGVENFITLVVFGLIFAMGVLGNSLVITVLARSKPGKPRSTTNLFILNLSIADLAYLLFCIPFQATVYALPTWVLGAFICKFIHYFFTVSMLVSIFTLAAMSVDRYVAIVHSRRSSSLRVSRNALLGVGFIWALSIAMASPVAYHQRLFHRDSNQTFCWEQWPNKLHKKAYVVCTFVFGYLLPLLLICFCYAKVLNHLHKKLKNMSKKSEASKKKTAQTVLVVVVVFGISWLPHHVVHLWAEFGAFPLTPASFFFRITAHCLAYSNSSVNPIIYAFLSENFRKAYKQVFKCHVCDESPRSETKENKSRMDTPPSTNCTHV.

The Extracellular segment spans residues 1–34; sequence MELAMVNLSEGNGSDPEPPAPESRPLFGIGVENF. N-linked (GlcNAc...) asparagine glycans are attached at residues asparagine 7 and asparagine 12. The chain crosses the membrane as a helical span at residues 35–55; sequence ITLVVFGLIFAMGVLGNSLVI. Over 56-70 the chain is Cytoplasmic; the sequence is TVLARSKPGKPRSTT. Residues 71-91 traverse the membrane as a helical segment; it reads NLFILNLSIADLAYLLFCIPF. The Extracellular portion of the chain corresponds to 92–109; it reads QATVYALPTWVLGAFICK. Cysteine 108 and cysteine 186 are disulfide-bonded. The helical transmembrane segment at 110 to 131 threads the bilayer; that stretch reads FIHYFFTVSMLVSIFTLAAMSV. The Cytoplasmic segment spans residues 132–151; the sequence is DRYVAIVHSRRSSSLRVSRN. The helical transmembrane segment at 152–172 threads the bilayer; the sequence is ALLGVGFIWALSIAMASPVAY. The Extracellular segment spans residues 173 to 197; the sequence is HQRLFHRDSNQTFCWEQWPNKLHKK. N-linked (GlcNAc...) asparagine glycosylation is present at asparagine 182. A helical transmembrane segment spans residues 198 to 218; the sequence is AYVVCTFVFGYLLPLLLICFC. The Cytoplasmic segment spans residues 219 to 247; sequence YAKVLNHLHKKLKNMSKKSEASKKKTAQT. The chain crosses the membrane as a helical span at residues 248 to 268; that stretch reads VLVVVVVFGISWLPHHVVHLW. The Extracellular portion of the chain corresponds to 269-270; that stretch reads AE. Residues 271–291 form a helical membrane-spanning segment; sequence FGAFPLTPASFFFRITAHCLA. The Cytoplasmic portion of the chain corresponds to 292 to 348; that stretch reads YSNSSVNPIIYAFLSENFRKAYKQVFKCHVCDESPRSETKENKSRMDTPPSTNCTHV. Cysteine 319 carries the S-palmitoyl cysteine lipid modification. Basic and acidic residues predominate over residues 328 to 337; sequence SETKENKSRM. Residues 328–348 form a disordered region; the sequence is SETKENKSRMDTPPSTNCTHV.

It belongs to the G-protein coupled receptor 1 family. As to quaternary structure, interacts with GRP39 AND HTR1A. In terms of processing, three cysteine residues are found in the C-terminus, at least one of which may be palmitoylated. In terms of tissue distribution, expression is detected in brain, spinal cord, heart and skeletal muscle.

It is found in the cell membrane. In terms of biological role, receptor for the hormone galanin. The activity of this receptor is mediated by G proteins that inhibit adenylate cyclase activity. The chain is Galanin receptor type 1 (Galr1) from Mus musculus (Mouse).